A 179-amino-acid polypeptide reads, in one-letter code: Ribulose bisphosphate carboxylase small subunit, chloroplastic 5 (179 aa).

A chloroplast-targeting transit peptide spans 1–58 (MASSATMLSSVATAACAAPAQASMVAPFVGLKSASAFPVTQKTATGLSTLPSNGGRVQ).

This sequence belongs to the RuBisCO small chain family. Heterohexadecamer of 8 large and 8 small subunits.

The protein localises to the plastid. It localises to the chloroplast. In terms of biological role, ruBisCO catalyzes two reactions: the carboxylation of D-ribulose 1,5-bisphosphate, the primary event in carbon dioxide fixation, as well as the oxidative fragmentation of the pentose substrate. Both reactions occur simultaneously and in competition at the same active site. Although the small subunit is not catalytic it is essential for maximal activity. This Fritillaria agrestis (Stinkbells) protein is Ribulose bisphosphate carboxylase small subunit, chloroplastic 5.